Consider the following 428-residue polypeptide: Trigger factor (428 aa).

The PPIase FKBP-type domain maps to 163–248 (GDTAVIDFEG…IKEIKVKELP (86 aa)).

This sequence belongs to the FKBP-type PPIase family. Tig subfamily.

It is found in the cytoplasm. It catalyses the reaction [protein]-peptidylproline (omega=180) = [protein]-peptidylproline (omega=0). In terms of biological role, involved in protein export. Acts as a chaperone by maintaining the newly synthesized protein in an open conformation. Functions as a peptidyl-prolyl cis-trans isomerase. This is Trigger factor from Ruminiclostridium cellulolyticum (strain ATCC 35319 / DSM 5812 / JCM 6584 / H10) (Clostridium cellulolyticum).